The following is a 160-amino-acid chain: NADH-quinone oxidoreductase subunit B (160 aa).

C37, C38, C102, and C132 together coordinate [4Fe-4S] cluster.

This sequence belongs to the complex I 20 kDa subunit family. NDH-1 is composed of 14 different subunits. Subunits NuoB, C, D, E, F, and G constitute the peripheral sector of the complex. Requires [4Fe-4S] cluster as cofactor.

It is found in the cell inner membrane. It carries out the reaction a quinone + NADH + 5 H(+)(in) = a quinol + NAD(+) + 4 H(+)(out). NDH-1 shuttles electrons from NADH, via FMN and iron-sulfur (Fe-S) centers, to quinones in the respiratory chain. Couples the redox reaction to proton translocation (for every two electrons transferred, four hydrogen ions are translocated across the cytoplasmic membrane), and thus conserves the redox energy in a proton gradient. This Neisseria gonorrhoeae (strain NCCP11945) protein is NADH-quinone oxidoreductase subunit B.